The chain runs to 264 residues: uncharacterized protein (264 aa).

A helical transmembrane segment spans residues 182 to 198; it reads TVTGVSNALGFIIAALL.

The protein to E.coli YjiC.

The protein localises to the membrane. This is an uncharacterized protein from Escherichia coli (strain K12).